The following is a 320-amino-acid chain: Malate dehydrogenase (320 aa).

Residues 10-15 and Asp-34 each bind NAD(+); that span reads GSGMIG. Residues Arg-83 and Arg-89 each coordinate substrate. Residues Asn-96 and 119 to 121 contribute to the NAD(+) site; that span reads ITN. Residues Asn-121 and Arg-152 each contribute to the substrate site. The active-site Proton acceptor is His-176.

This sequence belongs to the LDH/MDH superfamily. MDH type 3 family.

The catalysed reaction is (S)-malate + NAD(+) = oxaloacetate + NADH + H(+). Functionally, catalyzes the reversible oxidation of malate to oxaloacetate. In Rhizobium etli (strain CIAT 652), this protein is Malate dehydrogenase.